The following is a 261-amino-acid chain: Phosphoadenosine phosphosulfate reductase (261 aa).

The protein belongs to the PAPS reductase family. CysH subfamily.

It catalyses the reaction [thioredoxin]-disulfide + sulfite + adenosine 3',5'-bisphosphate + 2 H(+) = [thioredoxin]-dithiol + 3'-phosphoadenylyl sulfate. It participates in sulfur metabolism; hydrogen sulfide biosynthesis; sulfite from sulfate: step 3/3. Its function is as follows. The NADP dependent reduction of PAPS into sulfite involves thioredoxin which probably plays the role of a thiol carrier. This Saccharomyces cerevisiae (strain ATCC 204508 / S288c) (Baker's yeast) protein is Phosphoadenosine phosphosulfate reductase (MET16).